A 957-amino-acid polypeptide reads, in one-letter code: Serine-aspartate repeat-containing protein C (957 aa).

An N-terminal signal peptide occupies residues 1–50; it reads MNNKKTVTNRKGMIPNRLNKFSIRKYSVGTASILVGTTLIFGLSGHEAKA. The disordered stretch occupies residues 51 to 166; sequence AEHTNGELNQ…TPKTTTIKPR (116 aa). Positions 51 to 495 are ligand binding A region; the sequence is AEHTNGELNQ…GSSTANGDQK (445 aa). Residues 56–71 are compositionally biased toward polar residues; it reads GELNQSKNETTAPSEN. Over residues 72-83 the composition is skewed to basic and acidic residues; sequence KTTEKVDSRQLK. Residues 84–114 show a composition bias toward polar residues; sequence DNTQTATADQPKVTMSDSATVKETSSNMQSP. Over residues 115-132 the composition is skewed to low complexity; that stretch reads QNATASQSTTQTSNVTTN. The span at 133–164 shows a compositional bias: polar residues; the sequence is DKSSTTYSNETDKSNLTQAKDVSATPKTTTIK. CNA-B domains are found at residues 496-606 and 607-717; these read KYNL…YKTP and KYSL…EEET. The segment at 678–937 is disordered; the sequence is TQTGTNTTED…NNSNNGTLFG (260 aa). 2 stretches are compositionally biased toward acidic residues: residues 685–695 and 712–896; these read TEDDKDADGGE and YYEE…DSDS. The LPXTG sorting signal motif lies at 920 to 924; sequence LPETG. The segment covering 922-937 has biased composition (low complexity); the sequence is ETGSENNNSNNGTLFG. At Thr-923 the chain carries Pentaglycyl murein peptidoglycan amidated threonine. Residues 924–957 constitute a propeptide, removed by sortase; it reads GSENNNSNNGTLFGGLFAALGSLLLFGRRKKQNK.

This sequence belongs to the serine-aspartate repeat-containing protein (SDr) family. As to quaternary structure, homodimerizes; via N2-Domain. Interacts with host NRXN1; this interaction mediates bacterial attachment to host cells.

The protein resides in the secreted. The protein localises to the cell wall. Cell surface-associated calcium-binding protein which plays an important role in adhesion and pathogenesis. Mediates interactions with components of the extracellular matrix such as host NRXN1 to promote bacterial adhesion. The chain is Serine-aspartate repeat-containing protein C (sdrC) from Staphylococcus aureus (strain MSSA476).